We begin with the raw amino-acid sequence, 151 residues long: Transcriptional repressor NrdR (151 aa).

The segment at 3–34 (CPFCNAQDTKVIDSRLVSEGSQVRRRRSCNEC) is a zinc-finger region. An ATP-cone domain is found at 49 to 139 (PRLIKSDGRR…VYRSFKDVKE (91 aa)).

It belongs to the NrdR family. The cofactor is Zn(2+).

Negatively regulates transcription of bacterial ribonucleotide reductase nrd genes and operons by binding to NrdR-boxes. This is Transcriptional repressor NrdR from Psychromonas ingrahamii (strain DSM 17664 / CCUG 51855 / 37).